Reading from the N-terminus, the 177-residue chain is ATP-dependent protease subunit HslV (177 aa).

Thr-6 is an active-site residue. The Na(+) site is built by Ser-161, Cys-164, and Thr-167.

It belongs to the peptidase T1B family. HslV subfamily. As to quaternary structure, a double ring-shaped homohexamer of HslV is capped on each side by a ring-shaped HslU homohexamer. The assembly of the HslU/HslV complex is dependent on binding of ATP.

The protein resides in the cytoplasm. The enzyme catalyses ATP-dependent cleavage of peptide bonds with broad specificity.. With respect to regulation, allosterically activated by HslU binding. Functionally, protease subunit of a proteasome-like degradation complex believed to be a general protein degrading machinery. In Thermodesulfovibrio yellowstonii (strain ATCC 51303 / DSM 11347 / YP87), this protein is ATP-dependent protease subunit HslV.